The following is a 213-amino-acid chain: Small ribosomal subunit protein uS5 (213 aa).

In terms of domain architecture, S5 DRBM spans 49–112 (LEEEVMDVNL…DNAKYNLIKV (64 aa)).

This sequence belongs to the universal ribosomal protein uS5 family. Part of the 30S ribosomal subunit. Contacts protein S4.

Its function is as follows. With S4 and S12 plays an important role in translational accuracy. The chain is Small ribosomal subunit protein uS5 from Methanobrevibacter smithii (strain ATCC 35061 / DSM 861 / OCM 144 / PS).